Consider the following 206-residue polypeptide: GTP-binding protein YPT1 (206 aa).

Met-1 is subject to N-acetylmethionine. GTP-binding positions include 17 to 23 (SGVGKSC), 33 to 40 (YTNDYIST), Gly-66, and 121 to 124 (NKCD). Residue Cys-23 is the site of S-palmitoyl cysteine attachment. Residues 37 to 45 (YISTIGVDF) carry the Effector region motif. Residues 63-80 (DTAGQERFRTITSSYYRG) are interaction with GDI1. The S-palmitoyl cysteine moiety is linked to residue Cys-123. Residue Lys-144 forms a Glycyl lysine isopeptide (Lys-Gly) (interchain with G-Cter in ubiquitin) linkage. Residue 152–153 (AL) participates in GTP binding. Ser-172 and Ser-174 each carry phosphoserine. Residues 173–206 (MSQQNLNETTQKKEDKGNVNLKGQSLTNTGGGCC) are disordered. An interaction with GDI1 region spans residues 189–195 (GNVNLKG). Residues Cys-205 and Cys-206 are each lipidated (S-geranylgeranyl cysteine).

The protein belongs to the small GTPase superfamily. Rab family. As to quaternary structure, forms a complex with the Rab escort protein (REP) MRS6, which is recognized by Rab geranylgeranyltransferase BET2-BET4. Interacts with the Rab GDP dissociation inhibitor GDI1, which can retrieve from and deliver to membranes the GDP-bound and prenylated form of YPT1. Interacts with YIP1, which is required for proper membrane targeting of prenylated YPT1. Interacts with YIF1, YIP3, YIP4 and YIP5. Post-translationally, prenylation is required for interaction with GDI1 and YIP1.

The protein localises to the endoplasmic reticulum membrane. Its subcellular location is the golgi apparatus membrane. It is found in the cytoplasm. It localises to the preautophagosomal structure membrane. Its activity is regulated as follows. Rab activation is generally mediated by a guanine exchange factor (GEF), while inactivation through hydrolysis of bound GTP is catalyzed by a GTPase activating protein (GAP). YPT1 is activated by the GEFs DSS4 and TRAPP complex, and inactivated by GAPs GYP1, GYP5 and GYP8. The small GTPases Rab are key regulators of intracellular membrane trafficking, from the formation of transport vesicles to their fusion with membranes. Rabs cycle between an inactive GDP-bound form and an active GTP-bound form that is able to recruit to membranes different set of downstream effectors directly responsible for vesicle formation, movement, tethering and fusion. YPT1 regulates the trafficking of secretory vesicles from the endoplasmic reticulum (ER) to the Golgi. Vesicular transport depends on shuttling of YPT1 between membrane and cytosol by GDI1, probably by recycling it to its membrane of origin after a vesicle fusion event. Plays a role in the initial events of the autophagic vacuole development which take place at specialized regions of the endoplasmic reticulum. Also involved in the recycling of membrane proteins. The chain is GTP-binding protein YPT1 (YPT1) from Saccharomyces cerevisiae (strain ATCC 204508 / S288c) (Baker's yeast).